The chain runs to 1395 residues: Adventurous-gliding motility protein Z (1395 aa).

The Response regulatory domain maps to 4-122 (RVLIVESEHD…ELAALSHGIV (119 aa)). Asp-48 is modified (4-aspartylphosphate). Disordered regions lie at residues 137–172 (LNGTREAPPPMPPSLKAAAGGPPKLPKRERRSAMTE), 874–893 (AAESSAHIGDLTSERDGLRS), 919–947 (EQHAHQESRKAAASTQTTLEGQLAEARAH), 1212–1249 (AAESKAHEASTRLAAAQKERKDLEARHAKEQEDLAAKQ), 1287–1312 (RYKSKSATTATPAKAAAKPAAAEDDE), and 1326–1395 (AAAA…ELDK). Residues 213-911 (EGKIQILRDE…LEQTHGQLAA (699 aa)) adopt a coiled-coil conformation. Composition is skewed to basic and acidic residues over residues 919-928 (EQHAHQESRK) and 1228-1249 (QKERKDLEARHAKEQEDLAAKQ). Low complexity-rich tracts occupy residues 1291 to 1306 (KSATTATPAKAAAKPA) and 1326 to 1352 (AAAAQAPAPAKKPAAKPAAQAPAKKAP). A compositionally biased stretch (acidic residues) spans 1382–1395 (EDDDWTALVDELDK).

As to quaternary structure, interacts with MglA.

It is found in the cytoplasm. Required for adventurous-gliding motility (A motility), in response to environmental signals sensed by the frz chemosensory system. Forms ordered clusters that span the cell length and that remain stationary relative to the surface across which the cells move, serving as anchor points (focal, transient adhesion sites) that allow the bacterium to move forward. Clusters disassemble at the lagging cell pole. This Myxococcus xanthus (strain DK1622) protein is Adventurous-gliding motility protein Z (aglZ).